Consider the following 406-residue polypeptide: Biofilm regulatory protein A (406 aa).

Residues 1 to 26 (MKIGKKILIMLVTIFLTSLVALGVYA) form the signal peptide. The span at 347–397 (SSSASDYSSSGNYSGSSSDYGSSSSYGSNSSSGSSSDYSGQNSYNQGNYQQ) shows a compositional bias: low complexity. Residues 347-406 (SSSASDYSSSGNYSGSSSDYGSSSSYGSNSSSGSSSDYSGQNSYNQGNYQQPAAGTGIGN) are disordered.

This sequence belongs to the LytR/CpsA/Psr (LCP) family.

The protein localises to the cell envelope. Involved in biofilm formation, cell division, autolysis and the regulation of acid and oxidative stress tolerance. May be associated with systemic virulence in blood. This Streptococcus mutans serotype c (strain ATCC 700610 / UA159) protein is Biofilm regulatory protein A (brpA).